The chain runs to 314 residues: tRNA dimethylallyltransferase (314 aa).

Residue 10–17 (GPTAVGKT) coordinates ATP. A substrate-binding site is contributed by 12–17 (TAVGKT). An interaction with substrate tRNA region spans residues 35 to 38 (DSMQ).

This sequence belongs to the IPP transferase family. In terms of assembly, monomer. Mg(2+) serves as cofactor.

The catalysed reaction is adenosine(37) in tRNA + dimethylallyl diphosphate = N(6)-dimethylallyladenosine(37) in tRNA + diphosphate. Functionally, catalyzes the transfer of a dimethylallyl group onto the adenine at position 37 in tRNAs that read codons beginning with uridine, leading to the formation of N6-(dimethylallyl)adenosine (i(6)A). The sequence is that of tRNA dimethylallyltransferase from Clostridium novyi (strain NT).